A 240-amino-acid chain; its full sequence is Uridylate kinase (240 aa).

Residue 12-15 coordinates ATP; it reads KLSG. Residues 20–25 are involved in allosteric activation by GTP; it reads GDQGKG. G54 is a binding site for UMP. G55 and R59 together coordinate ATP. Residues D74 and 135-142 contribute to the UMP site; that span reads TGSPYFST. 3 residues coordinate ATP: N163, Y169, and D172.

This sequence belongs to the UMP kinase family. As to quaternary structure, homohexamer.

Its subcellular location is the cytoplasm. It carries out the reaction UMP + ATP = UDP + ADP. The protein operates within pyrimidine metabolism; CTP biosynthesis via de novo pathway; UDP from UMP (UMPK route): step 1/1. Allosterically activated by GTP. Inhibited by UTP. Its function is as follows. Catalyzes the reversible phosphorylation of UMP to UDP. The sequence is that of Uridylate kinase from Ligilactobacillus salivarius (strain UCC118) (Lactobacillus salivarius).